We begin with the raw amino-acid sequence, 358 residues long: Replication factor C subunit 5 (358 aa).

It belongs to the activator 1 small subunits family. In terms of assembly, heteropentamer of subunits rfc1, rfc2, rfc3, rfc4 and rfc5 that forms a complex (RFC) with PCNA in the presence of ATP. Two other complexes exist where rfc1 can be replaced by either ctf18 or elg1 to form the ctf18-RFC or the elg1-RFC complexes respectively.

The protein resides in the nucleus. In terms of biological role, the elongation of primed DNA templates by DNA polymerase delta and epsilon requires the action of the accessory proteins PCNA and activator 1. In Schizosaccharomyces pombe (strain 972 / ATCC 24843) (Fission yeast), this protein is Replication factor C subunit 5 (rfc5).